Reading from the N-terminus, the 841-residue chain is Taste receptor type 1 member 1 (841 aa).

The signal sequence occupies residues 1–20 (MLLCTARLVGLQLLISCCWA). The Extracellular portion of the chain corresponds to 21–567 (FACHSTESSP…VFLALREHTS (547 aa)). 6 N-linked (GlcNAc...) asparagine glycosylation sites follow: N87, N88, N95, N291, N479, and N529. The chain crosses the membrane as a helical span at residues 568-588 (WVLLAANTLLLLLLLGTAGLF). The Cytoplasmic segment spans residues 589–603 (AWHLDTPVVRSAGGR). Residues 604–624 (LCFLMLGSLAAGSGSLYGFFG) traverse the membrane as a helical segment. Residues 625-639 (EPTRPACLLRQALFA) are Extracellular-facing. The helical transmembrane segment at 640 to 660 (LGFTIFLSCLTVRSFQLIIIF) threads the bilayer. Residues 661 to 680 (KFSTKVPTFYHAWVQNHGAG) are Cytoplasmic-facing. The helical transmembrane segment at 681–701 (LFVMISSAAQLLICLTWLVVW) threads the bilayer. At 702 to 725 (TPLPAREYQRFPHLVMLECTETNS) the chain is on the extracellular side. Residues 726 to 746 (LGFILAFLYNGLLSISAFACS) form a helical membrane-spanning segment. Residues 747-761 (YLGKDLPENYNEAKC) lie on the Cytoplasmic side of the membrane. Residues 762–782 (VTFSLLFNFVSWIAFFTTASV) form a helical membrane-spanning segment. Residues 783-795 (YDGKYLPAANMMA) lie on the Extracellular side of the membrane. A helical transmembrane segment spans residues 796–816 (GLSSLSSGFGGYFLPKCYVIL). Over 817–841 (CRPDLNSTEHFQASIQDYTRRCGST) the chain is Cytoplasmic.

This sequence belongs to the G-protein coupled receptor 3 family. TAS1R subfamily. In terms of assembly, forms heterodimers with TAS1R3.

It localises to the cell membrane. Functionally, putative taste receptor. TAS1R1/TAS1R3 responds to the umami taste stimulus (the taste of monosodium glutamate). Sequence differences within and between species can significantly influence the selectivity and specificity of taste responses. The sequence is that of Taste receptor type 1 member 1 (TAS1R1) from Homo sapiens (Human).